The primary structure comprises 406 residues: Tryptophan 2,3-dioxygenase (406 aa).

Ser-19 carries the post-translational modification Phosphoserine. Residues 72–76 (FIITH) and Arg-144 contribute to the substrate site. Residue His-328 participates in heme binding. Thr-342 contributes to the substrate binding site.

The protein belongs to the tryptophan 2,3-dioxygenase family. As to quaternary structure, homotetramer. Dimer of dimers. Heme serves as cofactor.

It catalyses the reaction L-tryptophan + O2 = N-formyl-L-kynurenine. The protein operates within amino-acid degradation; L-tryptophan degradation via kynurenine pathway; L-kynurenine from L-tryptophan: step 1/2. In terms of biological role, heme-dependent dioxygenase that catalyzes the oxidative cleavage of the L-tryptophan (L-Trp) pyrrole ring and converts L-tryptophan to N-formyl-L-kynurenine. Catalyzes the oxidative cleavage of the indole moiety. The sequence is that of Tryptophan 2,3-dioxygenase from Mus musculus (Mouse).